The primary structure comprises 444 residues: uncharacterized protein (444 aa).

Residues 1 to 11 (MASSAGRDKLR) are compositionally biased toward basic and acidic residues. The segment at 1–35 (MASSAGRDKLRSRGQRVFAFGSSTPRDLSHMSKVP) is disordered.

This is an uncharacterized protein from Caenorhabditis elegans.